A 447-amino-acid polypeptide reads, in one-letter code: Probable glycine dehydrogenase (decarboxylating) subunit 1 (447 aa).

Belongs to the GcvP family. N-terminal subunit subfamily. As to quaternary structure, the glycine cleavage system is composed of four proteins: P, T, L and H. In this organism, the P 'protein' is a heterodimer of two subunits.

The enzyme catalyses N(6)-[(R)-lipoyl]-L-lysyl-[glycine-cleavage complex H protein] + glycine + H(+) = N(6)-[(R)-S(8)-aminomethyldihydrolipoyl]-L-lysyl-[glycine-cleavage complex H protein] + CO2. In terms of biological role, the glycine cleavage system catalyzes the degradation of glycine. The P protein binds the alpha-amino group of glycine through its pyridoxal phosphate cofactor; CO(2) is released and the remaining methylamine moiety is then transferred to the lipoamide cofactor of the H protein. The protein is Probable glycine dehydrogenase (decarboxylating) subunit 1 of Bacillus cytotoxicus (strain DSM 22905 / CIP 110041 / 391-98 / NVH 391-98).